An 839-amino-acid polypeptide reads, in one-letter code: Eukaryotic translation initiation factor 3 subunit C (839 aa).

Residues 1–93 (MSRFFVAGYN…DSDSEDEGRR (93 aa)) form a disordered region. Composition is skewed to acidic residues over residues 14–27 (SSEE…DEEL) and 34–58 (GEQE…SDSD). Residues 585–759 (FHQHINLELL…AFIQFASTEP (175 aa)) enclose the PCI domain. A disordered region spans residues 783–839 (EKTSSNGYGKKQPQQQQQQQQQQQQQQQQQKDLLQEDNSRFRYANVNTNNDEFQTTA). Over residues 794 to 812 (QPQQQQQQQQQQQQQQQQQ) the composition is skewed to low complexity. Over residues 827 to 839 (NVNTNNDEFQTTA) the composition is skewed to polar residues.

It belongs to the eIF-3 subunit C family. In terms of assembly, component of the eukaryotic translation initiation factor 3 (eIF-3) complex.

The protein resides in the cytoplasm. Component of the eukaryotic translation initiation factor 3 (eIF-3) complex, which is involved in protein synthesis of a specialized repertoire of mRNAs and, together with other initiation factors, stimulates binding of mRNA and methionyl-tRNAi to the 40S ribosome. The eIF-3 complex specifically targets and initiates translation of a subset of mRNAs involved in cell proliferation. In Scheffersomyces stipitis (strain ATCC 58785 / CBS 6054 / NBRC 10063 / NRRL Y-11545) (Yeast), this protein is Eukaryotic translation initiation factor 3 subunit C.